We begin with the raw amino-acid sequence, 153 residues long: Transthyretin (153 aa).

An N-terminal signal peptide occupies residues 1–24; it reads MAYYNTLALLTIFIFSGAFHRAQG. Cysteine 33 bears the Sulfocysteine mark. Residues lysine 38, glutamate 77, and serine 140 each contribute to the L-thyroxine site.

The protein belongs to the transthyretin family. In terms of assembly, homotetramer. Dimer of dimers. In the homotetramer, subunits assemble around a central channel that can accommodate two ligand molecules. Interacts with RBP4. In terms of processing, sulfonation of the reactive cysteine Cys-33 enhances the stability of the native conformation of TTR, avoiding misassembly of the protein leading to amyloid formation. Detected in plasma (at protein level). Expressed during metamorphosis in tadpole liver but not in tadpole brain, nor adult liver.

The protein resides in the secreted. Functionally, thyroid hormone-binding protein, with a much higher binding affinity for triiodothyronine (T3) than for thyroxine (T4). Probably transports triiodothyronine from the bloodstream to the brain. This Aquarana catesbeiana (American bullfrog) protein is Transthyretin.